An 85-amino-acid polypeptide reads, in one-letter code: MATKKAGGSTRNGRDSEAKRLGVKRFGGESVLAGSIIVRQRGTKFHAGNNVGMGRDHTLFATADGKVKFEVKGEKSRKYVSIVTE.

A disordered region spans residues 1–20 (MATKKAGGSTRNGRDSEAKR).

This sequence belongs to the bacterial ribosomal protein bL27 family.

This Haemophilus influenzae (strain PittEE) protein is Large ribosomal subunit protein bL27.